The primary structure comprises 157 residues: Spore germination protein GerT (157 aa).

Its subcellular location is the spore coat. Functionally, involved in spore germination; probably required at the earliest stage of germination. This Bacillus subtilis (strain 168) protein is Spore germination protein GerT (gerT).